We begin with the raw amino-acid sequence, 454 residues long: Phosphoglucosamine mutase (454 aa).

The Phosphoserine intermediate role is filled by Ser-104. Residues Ser-104, Asp-247, Asp-249, and Asp-251 each contribute to the Mg(2+) site. A Phosphoserine modification is found at Ser-104.

This sequence belongs to the phosphohexose mutase family. Mg(2+) serves as cofactor. Post-translationally, activated by phosphorylation.

The catalysed reaction is alpha-D-glucosamine 1-phosphate = D-glucosamine 6-phosphate. Functionally, catalyzes the conversion of glucosamine-6-phosphate to glucosamine-1-phosphate. This Bifidobacterium animalis subsp. lactis (strain AD011) protein is Phosphoglucosamine mutase.